The primary structure comprises 154 residues: Large ribosomal subunit protein uL13 (154 aa).

Belongs to the universal ribosomal protein uL13 family. As to quaternary structure, part of the 50S ribosomal subunit.

Functionally, this protein is one of the early assembly proteins of the 50S ribosomal subunit, although it is not seen to bind rRNA by itself. It is important during the early stages of 50S assembly. The protein is Large ribosomal subunit protein uL13 of Brucella suis (strain ATCC 23445 / NCTC 10510).